A 336-amino-acid polypeptide reads, in one-letter code: Probable G-protein coupled receptor 160 (336 aa).

Residues 1-20 (MTALSSKNCSLQYQLHQSPQ) lie on the Extracellular side of the membrane. N-linked (GlcNAc...) asparagine glycosylation is present at Asn8. A helical membrane pass occupies residues 21-41 (LLEASCLLFLIILGKVLLNIL). The Cytoplasmic segment spans residues 42 to 56 (LLRVRRGDARWTLME). A helical transmembrane segment spans residues 57-77 (YFCFSLALVDLLLLVNISILT). At 78–95 (YFRDFVVLGIRFTRYHIC) the chain is on the extracellular side. The helical transmembrane segment at 96–116 (LLTQIISFTYGFLHYPVCSLA) threads the bilayer. Residues 117–136 (CIDYWCNLSRASKQSSRWQK) are Cytoplasmic-facing. The helical transmembrane segment at 137 to 157 (LLYFLTVILTWISVLAYVLVD) threads the bilayer. At 158-186 (PAISVSLKAHRGYVYQCPAYVSTQSHWLS) the chain is on the extracellular side. Residues 187 to 207 (LSMLMVLFVAFLISWQEVVAL) traverse the membrane as a helical segment. Over 208-243 (LQAMRIASYKSKAALYFPFPLHCGYALSCREALLPR) the chain is Cytoplasmic. The helical transmembrane segment at 244 to 264 (LIVCFLGTWFPFVALQVLILS) threads the bilayer. Residues 265 to 272 (LRVQIPAY) are Extracellular-facing. The chain crosses the membrane as a helical span at residues 273–293 (IEMNVPWLYFVNSFLIAAVYW). Residues 294 to 336 (FNCHKLDLRDSSLPVDPFINWKCCFVPVHRLKQVERPMSIVIC) lie on the Cytoplasmic side of the membrane.

This sequence belongs to the G-protein coupled receptor 1 family.

The protein localises to the cell membrane. Its function is as follows. Orphan receptor. This is Probable G-protein coupled receptor 160 (Gpr160) from Mus musculus (Mouse).